Consider the following 451-residue polypeptide: Phosphoglucosamine mutase (451 aa).

The Phosphoserine intermediate role is filled by Ser104. Residues Ser104, Asp249, Asp251, and Asp253 each coordinate Mg(2+). Phosphoserine is present on Ser104.

Belongs to the phosphohexose mutase family. It depends on Mg(2+) as a cofactor. Activated by phosphorylation.

It catalyses the reaction alpha-D-glucosamine 1-phosphate = D-glucosamine 6-phosphate. Functionally, catalyzes the conversion of glucosamine-6-phosphate to glucosamine-1-phosphate. The chain is Phosphoglucosamine mutase from Psychrobacter sp. (strain PRwf-1).